The sequence spans 478 residues: Cytochrome c-552 (478 aa).

An N-terminal signal peptide occupies residues 1-26 (MTRIKINARRIFSLLIPFFFFTSVHA). Histidine 94 provides a ligand contact to heme c. The heme site is built by cysteine 122, cysteine 125, and lysine 126. Heme c is bound by residues cysteine 160, cysteine 163, histidine 164, cysteine 209, cysteine 212, and histidine 213. Positions 215, 216, 261, and 263 each coordinate Ca(2+). Tyrosine 216 is a substrate binding site. Histidine 264 contributes to the substrate binding site. Positions 275, 282, 285, 286, 301, 314, 317, 318, and 393 each coordinate heme c.

It belongs to the cytochrome c-552 family. Ca(2+) serves as cofactor. The cofactor is heme c.

The protein resides in the periplasm. The catalysed reaction is 6 Fe(III)-[cytochrome c] + NH4(+) + 2 H2O = 6 Fe(II)-[cytochrome c] + nitrite + 8 H(+). The protein operates within nitrogen metabolism; nitrate reduction (assimilation). Catalyzes the reduction of nitrite to ammonia, consuming six electrons in the process. This chain is Cytochrome c-552, found in Escherichia coli O9:H4 (strain HS).